A 205-amino-acid polypeptide reads, in one-letter code: Small ribosomal subunit protein uS4 (205 aa).

Residues 18-46 are disordered; that stretch reads NIWGRPKSPVNRREYGPGQHGQRRKGKLS. Residues 94-157 enclose the S4 RNA-binding domain; sequence RRLDTVVYRA…KQLAFVLEAS (64 aa).

This sequence belongs to the universal ribosomal protein uS4 family. Part of the 30S ribosomal subunit. Contacts protein S5. The interaction surface between S4 and S5 is involved in control of translational fidelity.

Its function is as follows. One of the primary rRNA binding proteins, it binds directly to 16S rRNA where it nucleates assembly of the body of the 30S subunit. With S5 and S12 plays an important role in translational accuracy. The sequence is that of Small ribosomal subunit protein uS4 from Rhodopseudomonas palustris (strain HaA2).